The sequence spans 105 residues: Large ribosomal subunit protein bL21c (105 aa).

This sequence belongs to the bacterial ribosomal protein bL21 family. As to quaternary structure, part of the 50S ribosomal subunit.

Its subcellular location is the plastid. The protein localises to the chloroplast. In terms of biological role, this protein binds to 23S rRNA. This chain is Large ribosomal subunit protein bL21c, found in Phaeodactylum tricornutum (strain CCAP 1055/1).